The sequence spans 133 residues: Small ribosomal subunit protein uS9 (133 aa).

Residues 95 to 113 (GDSKQELKSRGFLTRDPRK) show a composition bias toward basic and acidic residues. The disordered stretch occupies residues 95–133 (GDSKQELKSRGFLTRDPRKKERKKYGHKKARKSFQFSKR). Basic residues predominate over residues 114–133 (KERKKYGHKKARKSFQFSKR).

It belongs to the universal ribosomal protein uS9 family.

This Chlamydia felis (strain Fe/C-56) (Chlamydophila felis) protein is Small ribosomal subunit protein uS9.